The sequence spans 687 residues: Ferric transport system permease protein FbpB (687 aa).

Transmembrane regions (helical) follow at residues 10–30, 50–70, 85–105, 106–126, 141–161, 192–212, 226–246, 271–291, 318–338, 347–367, 378–398, 425–445, 450–472, 484–504, 517–537, 538–558, 594–614, 620–640, and 649–669; these read LFES…ALPS, GWSS…FWLL, LGLI…YKVS, MGYS…FAFA, LLSI…AIFI, LFLS…FALY, IFSI…VTLM, GFNG…FMIL, YNII…IVFI, PLVL…YIAG, LGSM…MWIG, IIVM…SIFY, VNWG…QGLS, IYAG…AYIV, FLTM…YILA, FNDA…SMVM, IWFI…VTSF, TVSA…AYIL, and GVAI…ILFF. One can recognise an ABC transmembrane type-1 1 domain in the interval 188-393; the sequence is ISNSLFLSGF…IFSLLIFIVQ (206 aa). One can recognise an ABC transmembrane type-1 2 domain in the interval 479 to 669; it reads LINTMIYAGI…VVMMAIILFF (191 aa).

Belongs to the binding-protein-dependent transport system permease family. FbpB subfamily. As to quaternary structure, the complex is composed of two ATP-binding proteins (FbpC), two transmembrane proteins (FbpB) and a solute-binding protein (FbpA).

It localises to the cell inner membrane. In terms of biological role, part of the ABC transporter complex FbpABC (TC 3.A.1.10.1) involved in Fe(3+) ions import. Probably responsible for the translocation of the substrate across the membrane. In Actinobacillus pleuropneumoniae (Haemophilus pleuropneumoniae), this protein is Ferric transport system permease protein FbpB (fbpB).